The sequence spans 434 residues: Glutamate-1-semialdehyde 2,1-aminomutase 1 (434 aa).

K270 carries the post-translational modification N6-(pyridoxal phosphate)lysine.

This sequence belongs to the class-III pyridoxal-phosphate-dependent aminotransferase family. HemL subfamily. As to quaternary structure, homodimer. Requires pyridoxal 5'-phosphate as cofactor.

It localises to the cytoplasm. It catalyses the reaction (S)-4-amino-5-oxopentanoate = 5-aminolevulinate. The protein operates within porphyrin-containing compound metabolism; protoporphyrin-IX biosynthesis; 5-aminolevulinate from L-glutamyl-tRNA(Glu): step 2/2. This Bacillus thuringiensis subsp. konkukian (strain 97-27) protein is Glutamate-1-semialdehyde 2,1-aminomutase 1.